The following is a 177-amino-acid chain: Phycocyanin-645 beta chain (177 aa).

Tyrosine 18 contributes to the mesobiliverdin binding site. The (2R,3E)-phycocyanobilin site is built by lysine 28, asparagine 35, and aspartate 39. 15,16-dihydrobiliverdin-binding residues include cysteine 50, aspartate 54, and cysteine 61. (2R,3E)-phycocyanobilin-binding residues include arginine 77, cysteine 82, arginine 84, and aspartate 85. Residue glutamine 148 coordinates 15,16-dihydrobiliverdin. The (2R,3E)-phycocyanobilin site is built by proline 154, glycine 156, and cysteine 158.

The protein belongs to the phycobiliprotein family. As to quaternary structure, heterotetramer of 2 different alpha chains and 2 identical beta chains which form 2 alpha-beta heterodimers within the heterotetramer. Post-translationally, contains two phycocyanobilin chromophores, one mesobiliverdin chromophore and one 15,16-dihydrobiliverdin chromophore with binding mediated by both the alpha and beta subunits.

The protein resides in the plastid. Its subcellular location is the chloroplast thylakoid membrane. Functionally, light-harvesting photosynthetic tetrapyrrole chromophore-protein from the phycobiliprotein complex. The chain is Phycocyanin-645 beta chain from Chroomonas sp.